A 264-amino-acid polypeptide reads, in one-letter code: Transcription factor bHLH52 (264 aa).

Positions 134-183 constitute a bHLH domain; the sequence is RELSAQSIAARKRRRRITEKTQELGKLIPGSQKHNTAEMFNAAAKYVKFL.

In terms of assembly, homodimer. Expressed constitutively in roots, leaves, stems, and flowers.

The protein resides in the nucleus. The polypeptide is Transcription factor bHLH52 (BHLH52) (Arabidopsis thaliana (Mouse-ear cress)).